Here is a 206-residue protein sequence, read N- to C-terminus: Putative metal transport protein HI_1621 (206 aa).

6 consecutive transmembrane segments (helical) span residues 6 to 26 (GVLHTPILLAGAVLAVAGIAV), 38 to 58 (LTALFAAAFFVAGTIHVPVGI), 72 to 92 (FLGWAVFPAFLIALLLQVIFF), 94 to 114 (FGGFAVLGVNLCVMATPAVIA), 136 to 156 (IGAGVIGVGGAGALASFVLML), and 165 to 185 (LVWLLLVSHIPVFILDSIISV).

It belongs to the CbiM family.

The protein localises to the cell membrane. May be involved in metal transport. The sequence is that of Putative metal transport protein HI_1621 from Haemophilus influenzae (strain ATCC 51907 / DSM 11121 / KW20 / Rd).